A 79-amino-acid polypeptide reads, in one-letter code: Acyl carrier protein (79 aa).

Residues 2 to 77 (SNIEERVKKI…QAIDYINAHA (76 aa)) enclose the Carrier domain. Position 37 is an O-(pantetheine 4'-phosphoryl)serine (Ser37).

This sequence belongs to the acyl carrier protein (ACP) family. In terms of processing, 4'-phosphopantetheine is transferred from CoA to a specific serine of apo-ACP by AcpS. This modification is essential for activity because fatty acids are bound in thioester linkage to the sulfhydryl of the prosthetic group.

Its subcellular location is the cytoplasm. It participates in lipid metabolism; fatty acid biosynthesis. In terms of biological role, carrier of the growing fatty acid chain in fatty acid biosynthesis. The protein is Acyl carrier protein of Thioalkalivibrio sulfidiphilus (strain HL-EbGR7).